The sequence spans 357 residues: sn-glycerol-3-phosphate import ATP-binding protein UgpC (357 aa).

The ABC transporter domain occupies 4–235; the sequence is LKLQAVTKSY…PASLFVASFI (232 aa). 37–44 is a binding site for ATP; that stretch reads GPSGCGKS.

This sequence belongs to the ABC transporter superfamily. sn-glycerol-3-phosphate importer (TC 3.A.1.1.3) family. As to quaternary structure, the complex is composed of two ATP-binding proteins (UgpC), two transmembrane proteins (UgpA and UgpE) and a solute-binding protein (UgpB).

The protein resides in the cell inner membrane. It catalyses the reaction sn-glycerol 3-phosphate(out) + ATP + H2O = sn-glycerol 3-phosphate(in) + ADP + phosphate + H(+). Part of the ABC transporter complex UgpBAEC involved in sn-glycerol-3-phosphate (G3P) import. Responsible for energy coupling to the transport system. This chain is sn-glycerol-3-phosphate import ATP-binding protein UgpC, found in Pectobacterium atrosepticum (strain SCRI 1043 / ATCC BAA-672) (Erwinia carotovora subsp. atroseptica).